A 388-amino-acid chain; its full sequence is S-adenosylmethionine synthase (388 aa).

An ATP-binding site is contributed by His-17. Asp-19 contributes to the Mg(2+) binding site. Residue Glu-45 coordinates K(+). Glu-58 and Gln-106 together coordinate L-methionine. Residues 106-116 (QSAHISQGVDR) are flexible loop. ATP-binding positions include 166–168 (DAK), Asp-241, 247–248 (RK), Ala-264, and Lys-268. Asp-241 is an L-methionine binding site. Lys-272 contributes to the L-methionine binding site.

It belongs to the AdoMet synthase family. Homotetramer; dimer of dimers. It depends on Mg(2+) as a cofactor. Requires K(+) as cofactor.

Its subcellular location is the cytoplasm. The catalysed reaction is L-methionine + ATP + H2O = S-adenosyl-L-methionine + phosphate + diphosphate. It functions in the pathway amino-acid biosynthesis; S-adenosyl-L-methionine biosynthesis; S-adenosyl-L-methionine from L-methionine: step 1/1. Functionally, catalyzes the formation of S-adenosylmethionine (AdoMet) from methionine and ATP. The overall synthetic reaction is composed of two sequential steps, AdoMet formation and the subsequent tripolyphosphate hydrolysis which occurs prior to release of AdoMet from the enzyme. This Paracoccus denitrificans (strain Pd 1222) protein is S-adenosylmethionine synthase.